The sequence spans 174 residues: Solute carrier family 2, facilitated glucose transporter member 4 (174 aa).

Residues 1 to 19 are Cytoplasmic-facing; it reads QQIGSEDGEPPQQRVTGTL. Positions 2 to 8 are interaction with SRFBP1; that stretch reads QIGSEDG. The residue at position 5 (Ser-5) is a Phosphoserine. The helical transmembrane segment at 20–40 threads the bilayer; sequence VLAVFSAVLGSLQFGYNIGVI. Residues 41 to 76 lie on the Extracellular side of the membrane; it reads NAPQKVIEQSYNETWLGRQGPNGPGSIPPGTLTTLW. An N-linked (GlcNAc...) asparagine glycan is attached at Asn-52. A helical transmembrane segment spans residues 77–97; the sequence is ALSVAIFSVGGMFSSFLLGII. At 98–114 the chain is on the cytoplasmic side; that stretch reads SQWLGRKKAMLFNNTLA. Residues 115-135 form a helical membrane-spanning segment; sequence VLAGALMGLAKAAASYEMLIL. Residues 136–137 are Extracellular-facing; sequence GR. Residues 138 to 158 traverse the membrane as a helical segment; it reads FLIGAYSGLASGLVPMYVGEI. Topologically, residues 159–166 are cytoplasmic; it reads APTHLRGA. A helical membrane pass occupies residues 167 to 174; the sequence is LGTLNQLA.

It belongs to the major facilitator superfamily. Sugar transporter (TC 2.A.1.1) family. Glucose transporter subfamily. As to quaternary structure, binds to DAXX. Interacts via its N-terminus with SRFBP1. Interacts with NDUFA9. Interacts with TRARG1; the interaction is required for proper SLC2A4 recycling after insulin stimulation. Post-translationally, sumoylated. Palmitoylated. Palmitoylation by ZDHHC7 controls the insulin-dependent translocation of GLUT4 to the plasma membrane.

The protein resides in the cell membrane. It is found in the endomembrane system. The protein localises to the cytoplasm. Its subcellular location is the perinuclear region. It catalyses the reaction D-glucose(out) = D-glucose(in). In terms of biological role, insulin-regulated facilitative glucose transporter, which plays a key role in removal of glucose from circulation. Response to insulin is regulated by its intracellular localization: in the absence of insulin, it is efficiently retained intracellularly within storage compartments in muscle and fat cells. Upon insulin stimulation, translocates from these compartments to the cell surface where it transports glucose from the extracellular milieu into the cell. This is Solute carrier family 2, facilitated glucose transporter member 4 from Sus scrofa (Pig).